The sequence spans 426 residues: Pyrophosphate--fructose 6-phosphate 1-phosphotransferase 1 (426 aa).

G15 serves as a coordination point for diphosphate. D114 lines the Mg(2+) pocket. Residues 140 to 142 (TID), 186 to 188 (MGR), E247, and 308 to 311 (YELR) each bind substrate. D142 serves as the catalytic Proton acceptor.

It belongs to the phosphofructokinase type A (PFKA) family. PPi-dependent PFK group II subfamily. Clade 'Short' sub-subfamily. Homotetramer. Requires Mg(2+) as cofactor.

It localises to the cytoplasm. It carries out the reaction beta-D-fructose 6-phosphate + diphosphate = beta-D-fructose 1,6-bisphosphate + phosphate + H(+). The protein operates within carbohydrate degradation; glycolysis; D-glyceraldehyde 3-phosphate and glycerone phosphate from D-glucose: step 3/4. With respect to regulation, non-allosteric. Its function is as follows. Catalyzes the phosphorylation of D-fructose 6-phosphate, the first committing step of glycolysis. Uses inorganic phosphate (PPi) as phosphoryl donor instead of ATP like common ATP-dependent phosphofructokinases (ATP-PFKs), which renders the reaction reversible, and can thus function both in glycolysis and gluconeogenesis. Consistently, PPi-PFK can replace the enzymes of both the forward (ATP-PFK) and reverse (fructose-bisphosphatase (FBPase)) reactions. The sequence is that of Pyrophosphate--fructose 6-phosphate 1-phosphotransferase 1 (Pfk1) from Trichomonas vaginalis (strain ATCC PRA-98 / G3).